A 554-amino-acid chain; its full sequence is Rab GTPase-binding effector protein 2 (554 aa).

Over residues 1–15 the composition is skewed to low complexity; the sequence is MAAAPAALALDPQPQ. 3 disordered regions span residues 1 to 29, 167 to 250, and 375 to 395; these read MAAA…ELSR, IQRR…ETAS, and EQLP…DEAL. Residues 15 to 173 adopt a coiled-coil conformation; sequence QEEQKDASES…IQEIQRRPRQ (159 aa). Over residues 16–29 the composition is skewed to basic and acidic residues; the sequence is EEQKDASESSELSR. Phosphoserine is present on residues Ser176, Ser180, Ser187, and Ser191. The stretch at 274 to 512 forms a coiled coil; the sequence is DSQWEQLQVE…LETSEQVQRD (239 aa). Polar residues predominate over residues 377–386; sequence LPSSALQGSE.

It belongs to the rabaptin family. Heterodimer with RABGEF1. The dimer binds RAB5A that has been activated by GTP-binding. Interacts with SDCCAG8; this interaction is important for ciliogenesis regulation. Interacts with RAB4A; this interaction may mediate VEGFR2 cell surface expression.

Its subcellular location is the cytoplasm. It is found in the early endosome. The protein resides in the cytoskeleton. The protein localises to the microtubule organizing center. It localises to the centrosome. Its subcellular location is the cilium basal body. Plays a role in membrane trafficking and in homotypic early endosome fusion. Participates in arteriogenesis by regulating vascular endothelial growth factor receptor 2/VEGFR2 cell surface expression and endosomal trafficking. By interacting with SDCCAG8, localizes to centrosomes and plays a critical role in ciliogenesis. This is Rab GTPase-binding effector protein 2 (Rabep2) from Rattus norvegicus (Rat).